The sequence spans 314 residues: Malate dehydrogenase (314 aa).

Residues 12–17 and aspartate 36 each bind NAD(+); that span reads GAGFTG. Residues arginine 87 and arginine 93 each contribute to the substrate site. Residues asparagine 100 and 123–125 each bind NAD(+); that span reads LTN. Residue asparagine 125 coordinates substrate. At serine 149 the chain carries Phosphoserine. Substrate is bound at residue arginine 156. Histidine 180 (proton acceptor) is an active-site residue.

This sequence belongs to the LDH/MDH superfamily. MDH type 3 family.

It carries out the reaction (S)-malate + NAD(+) = oxaloacetate + NADH + H(+). Its function is as follows. Catalyzes the reversible oxidation of malate to oxaloacetate. This is Malate dehydrogenase from Halalkalibacterium halodurans (strain ATCC BAA-125 / DSM 18197 / FERM 7344 / JCM 9153 / C-125) (Bacillus halodurans).